The sequence spans 342 residues: Nucleoid-associated protein Sputcn32_2288 (342 aa).

It belongs to the YejK family.

The protein resides in the cytoplasm. It is found in the nucleoid. This Shewanella putrefaciens (strain CN-32 / ATCC BAA-453) protein is Nucleoid-associated protein Sputcn32_2288.